The following is a 239-amino-acid chain: Ribonuclease PH (239 aa).

Phosphate-binding positions include R87 and 125–127 (GTR).

This sequence belongs to the RNase PH family. Homohexameric ring arranged as a trimer of dimers.

It catalyses the reaction tRNA(n+1) + phosphate = tRNA(n) + a ribonucleoside 5'-diphosphate. Its function is as follows. Phosphorolytic 3'-5' exoribonuclease that plays an important role in tRNA 3'-end maturation. Removes nucleotide residues following the 3'-CCA terminus of tRNAs; can also add nucleotides to the ends of RNA molecules by using nucleoside diphosphates as substrates, but this may not be physiologically important. Probably plays a role in initiation of 16S rRNA degradation (leading to ribosome degradation) during starvation. The chain is Ribonuclease PH from Cellvibrio japonicus (strain Ueda107) (Pseudomonas fluorescens subsp. cellulosa).